The chain runs to 196 residues: Recombination protein RecR (196 aa).

The C4-type zinc finger occupies 57-72; that stretch reads CERCNTFTEAPVCSTC. A Toprim domain is found at 80–175; it reads RQLCVVETPA…SVTRLARGVP (96 aa).

Belongs to the RecR family.

In terms of biological role, may play a role in DNA repair. It seems to be involved in an RecBC-independent recombinational process of DNA repair. It may act with RecF and RecO. This is Recombination protein RecR from Methylibium petroleiphilum (strain ATCC BAA-1232 / LMG 22953 / PM1).